The sequence spans 436 residues: Chromosomal replication initiator protein DnaA (436 aa).

Residues Met1–Lys69 are domain I, interacts with DnaA modulators. The interval Lys69–Ser99 is domain II. Residues Ile100–Ala314 are domain III, AAA+ region. ATP-binding residues include Gly144, Gly146, Lys147, and Thr148. The domain IV, binds dsDNA stretch occupies residues Ser315–Gly436.

It belongs to the DnaA family. Oligomerizes as a right-handed, spiral filament on DNA at oriC.

Its subcellular location is the cytoplasm. Functionally, plays an essential role in the initiation and regulation of chromosomal replication. ATP-DnaA binds to the origin of replication (oriC) to initiate formation of the DNA replication initiation complex once per cell cycle. Binds the DnaA box (a 9 base pair repeat at the origin) and separates the double-stranded (ds)DNA. Forms a right-handed helical filament on oriC DNA; dsDNA binds to the exterior of the filament while single-stranded (ss)DNA is stabiized in the filament's interior. The ATP-DnaA-oriC complex binds and stabilizes one strand of the AT-rich DNA unwinding element (DUE), permitting loading of DNA polymerase. After initiation quickly degrades to an ADP-DnaA complex that is not apt for DNA replication. Binds acidic phospholipids. The sequence is that of Chromosomal replication initiator protein DnaA from Campylobacter concisus (strain 13826).